The primary structure comprises 321 residues: Lambda-crystallin homolog (321 aa).

Position 6 is a phosphoserine (S6). Residues 19–20, D39, E100, and K105 each bind NAD(+); that span reads LI.

Belongs to the 3-hydroxyacyl-CoA dehydrogenase family. In terms of assembly, homodimer.

It is found in the cytoplasm. It catalyses the reaction L-gulonate + NAD(+) = 3-dehydro-L-gulonate + NADH + H(+). Its activity is regulated as follows. Inhibited by malonate. Its function is as follows. Has high L-gulonate 3-dehydrogenase activity. It also exhibits low dehydrogenase activity toward L-3-hydroxybutyrate (HBA) and L-threonate. The sequence is that of Lambda-crystallin homolog (CRYL1) from Bos taurus (Bovine).